The following is a 513-amino-acid chain: ATP synthase subunit alpha (513 aa).

169 to 176 (GDRQTGKT) serves as a coordination point for ATP.

Belongs to the ATPase alpha/beta chains family. F-type ATPases have 2 components, CF(1) - the catalytic core - and CF(0) - the membrane proton channel. CF(1) has five subunits: alpha(3), beta(3), gamma(1), delta(1), epsilon(1). CF(0) has three main subunits: a(1), b(2) and c(9-12). The alpha and beta chains form an alternating ring which encloses part of the gamma chain. CF(1) is attached to CF(0) by a central stalk formed by the gamma and epsilon chains, while a peripheral stalk is formed by the delta and b chains.

The protein localises to the cell inner membrane. The catalysed reaction is ATP + H2O + 4 H(+)(in) = ADP + phosphate + 5 H(+)(out). Its function is as follows. Produces ATP from ADP in the presence of a proton gradient across the membrane. The alpha chain is a regulatory subunit. This is ATP synthase subunit alpha from Yersinia enterocolitica serotype O:8 / biotype 1B (strain NCTC 13174 / 8081).